The following is a 132-amino-acid chain: SH2 domain-containing protein 1B (132 aa).

One can recognise an SH2 domain in the interval 5 to 101 (YYHGRLTKQD…GMVVHLLKPI (97 aa)). Phosphotyrosine is present on Tyr-127.

In terms of assembly, binds to the phosphorylated receptors CD84, SLAMF1, LY9 and CD244. Does not bind to non-phosphorylated SLAMF1. Interacts with SLAMF7 (via ITSM phosphorylated on 'Tyr-304'). Interacts with Src kinases HCK, LYN, FYN, FGR and LCK (via kinase domains). Interacts (phosphorylated at Tyr-127) with PLCG1.

Cytoplasmic adapter regulating receptors of the signaling lymphocytic activation molecule (SLAM) family such as CD84, SLAMF1, LY9 and CD244. In SLAM signaling seems to cooperate with SH2D1A/SAP. Plays a role in regulation of effector functions of natural killer (NK) cells by controlling signal transduction through CD244/2B4 without effecting its tyrosine phosphorylation; downstream signaling involves PLCG1 and ERK activation. Activation of SLAMF7-mediated NK cell function does not effect receptor tyrosine phosphorylation but distal signaling. In the context of NK cell-mediated cytotoxicity does not enhance conjugate formation with target cells but stimulates polarization of the microtubule-organizing center and cytotoxic granules toward the NK cell synapse. Negatively regulates CD40-induced cytokine production in dendritic cells downstream of SLAM family receptors probably by inducing activation of the PI3K pathway to inhibit p38 MAPK and JNK activation. The polypeptide is SH2 domain-containing protein 1B (SH2D1B) (Homo sapiens (Human)).